The following is a 137-amino-acid chain: uncharacterized protein (137 aa).

The protein belongs to the DCC thiol-disulfide oxidoreductase family.

This is an uncharacterized protein from Bacillus subtilis (strain 168).